The primary structure comprises 210 residues: Ribosomal RNA large subunit methyltransferase E (210 aa).

S-adenosyl-L-methionine contacts are provided by G61, W63, D81, D97, and D122. K162 serves as the catalytic Proton acceptor.

This sequence belongs to the class I-like SAM-binding methyltransferase superfamily. RNA methyltransferase RlmE family.

It localises to the cytoplasm. The enzyme catalyses uridine(2552) in 23S rRNA + S-adenosyl-L-methionine = 2'-O-methyluridine(2552) in 23S rRNA + S-adenosyl-L-homocysteine + H(+). In terms of biological role, specifically methylates the uridine in position 2552 of 23S rRNA at the 2'-O position of the ribose in the fully assembled 50S ribosomal subunit. The chain is Ribosomal RNA large subunit methyltransferase E from Xanthomonas campestris pv. campestris (strain 8004).